Consider the following 174-residue polypeptide: Repair DNA polymerase X (174 aa).

The involved in ssDNA binding stretch occupies residues 42–51 (REEKMLNDVD). Mg(2+) contacts are provided by aspartate 49 and aspartate 51. Cysteines 81 and 86 form a disulfide. Aspartate 100 serves as a coordination point for Mg(2+).

Belongs to the DNA polymerase type-X family. Mg(2+) is required as a cofactor.

The protein localises to the virion. It carries out the reaction DNA(n) + a 2'-deoxyribonucleoside 5'-triphosphate = DNA(n+1) + diphosphate. Error-prone polymerase lacking a proofreading 3'-5' exonuclease which catalyzes the gap-filling reaction during the DNA repair process. Specifically binds intermediates in the single-nucleotide base-excision repair process. Also catalyzes DNA polymerization with low nucleotide-insertion fidelity. Probably acts as a strategic DNA mutase, which gives rise to a rapid emergence of variants. Generates mismatched G-G pairs, in that case, the polymerase first binds the deoxynucleotide followed by mismatch formation. Together with the viral DNA ligase, fills the single nucleotide gaps generated by the AP endonuclease. Binds DNA with high affinity via the helix alphaE. This Ornithodoros (relapsing fever ticks) protein is Repair DNA polymerase X.